The sequence spans 164 residues: Cyclic pyranopterin monophosphate synthase (164 aa).

Substrate contacts are provided by residues 73 to 75 (LCH) and 111 to 112 (ME). The active site involves Asp126.

The protein belongs to the MoaC family. Homohexamer; trimer of dimers.

It carries out the reaction (8S)-3',8-cyclo-7,8-dihydroguanosine 5'-triphosphate = cyclic pyranopterin phosphate + diphosphate. It participates in cofactor biosynthesis; molybdopterin biosynthesis. Its function is as follows. Catalyzes the conversion of (8S)-3',8-cyclo-7,8-dihydroguanosine 5'-triphosphate to cyclic pyranopterin monophosphate (cPMP). The chain is Cyclic pyranopterin monophosphate synthase from Herpetosiphon aurantiacus (strain ATCC 23779 / DSM 785 / 114-95).